A 300-amino-acid chain; its full sequence is Nucleotide-binding protein TM1040_2438 (300 aa).

24 to 31 provides a ligand contact to ATP; that stretch reads GPSGAGRT. 71-74 contacts GTP; it reads DPRN.

Belongs to the RapZ-like family.

Displays ATPase and GTPase activities. In Ruegeria sp. (strain TM1040) (Silicibacter sp.), this protein is Nucleotide-binding protein TM1040_2438.